We begin with the raw amino-acid sequence, 535 residues long: CTP synthase (535 aa).

An amidoligase domain region spans residues 1–267 (MTKYIFVTGG…DQIVCDHLKL (267 aa)). A CTP-binding site is contributed by serine 13. Residue serine 13 coordinates UTP. An ATP-binding site is contributed by 14–19 (SLGKGI). Residue tyrosine 54 coordinates L-glutamine. Aspartate 71 provides a ligand contact to ATP. Aspartate 71 and glutamate 141 together coordinate Mg(2+). Residues 148–150 (DIE), 188–193 (KTKPTQ), and lysine 224 contribute to the CTP site. UTP is bound by residues 188–193 (KTKPTQ) and lysine 224. 240-242 (RDA) provides a ligand contact to ATP. The region spanning 292-534 (KIALVGKYVE…VRASITNKES (243 aa)) is the Glutamine amidotransferase type-1 domain. Glycine 354 contacts L-glutamine. Residue cysteine 381 is the Nucleophile; for glutamine hydrolysis of the active site. Residues 382 to 385 (LGMQ), glutamate 405, and arginine 462 each bind L-glutamine. Active-site residues include histidine 507 and glutamate 509.

The protein belongs to the CTP synthase family. Homotetramer.

It carries out the reaction UTP + L-glutamine + ATP + H2O = CTP + L-glutamate + ADP + phosphate + 2 H(+). The enzyme catalyses L-glutamine + H2O = L-glutamate + NH4(+). The catalysed reaction is UTP + NH4(+) + ATP = CTP + ADP + phosphate + 2 H(+). Its pathway is pyrimidine metabolism; CTP biosynthesis via de novo pathway; CTP from UDP: step 2/2. With respect to regulation, allosterically activated by GTP, when glutamine is the substrate; GTP has no effect on the reaction when ammonia is the substrate. The allosteric effector GTP functions by stabilizing the protein conformation that binds the tetrahedral intermediate(s) formed during glutamine hydrolysis. Inhibited by the product CTP, via allosteric rather than competitive inhibition. Functionally, catalyzes the ATP-dependent amination of UTP to CTP with either L-glutamine or ammonia as the source of nitrogen. Regulates intracellular CTP levels through interactions with the four ribonucleotide triphosphates. This Bacillus cereus (strain AH187) protein is CTP synthase.